A 176-amino-acid polypeptide reads, in one-letter code: Large ribosomal subunit protein uL22z (176 aa).

Basic and acidic residues predominate over residues 154-163; the sequence is KEEPVKKEPE. Residues 154-176 form a disordered region; sequence KEEPVKKEPETQLAAKSKKGASS.

It belongs to the universal ribosomal protein uL22 family.

In Arabidopsis thaliana (Mouse-ear cress), this protein is Large ribosomal subunit protein uL22z (RPL17A).